The following is a 122-amino-acid chain: Small ribosomal subunit protein uS13 (122 aa).

The segment at 95-122 is disordered; that stretch reads GLPVRGQKTKTNARTRKGPKRTVANKKK.

The protein belongs to the universal ribosomal protein uS13 family. Part of the 30S ribosomal subunit. Forms a loose heterodimer with protein S19. Forms two bridges to the 50S subunit in the 70S ribosome.

Located at the top of the head of the 30S subunit, it contacts several helices of the 16S rRNA. In the 70S ribosome it contacts the 23S rRNA (bridge B1a) and protein L5 of the 50S subunit (bridge B1b), connecting the 2 subunits; these bridges are implicated in subunit movement. Contacts the tRNAs in the A and P-sites. In Agathobacter rectalis (strain ATCC 33656 / DSM 3377 / JCM 17463 / KCTC 5835 / VPI 0990) (Eubacterium rectale), this protein is Small ribosomal subunit protein uS13.